A 197-amino-acid chain; its full sequence is Imidazoleglycerol-phosphate dehydratase (197 aa).

It belongs to the imidazoleglycerol-phosphate dehydratase family.

The protein resides in the cytoplasm. The enzyme catalyses D-erythro-1-(imidazol-4-yl)glycerol 3-phosphate = 3-(imidazol-4-yl)-2-oxopropyl phosphate + H2O. It participates in amino-acid biosynthesis; L-histidine biosynthesis; L-histidine from 5-phospho-alpha-D-ribose 1-diphosphate: step 6/9. The chain is Imidazoleglycerol-phosphate dehydratase from Thermobifida fusca (strain YX).